Here is a 542-residue protein sequence, read N- to C-terminus: MQTKYIFITGGVCSSLGKGLTSAAIGLLLEKKGLRVSMLKLDPYLNVDPGTMSPFQHGEVYVTDDGAETDLDLGHYYRYTNSFLSKASNATSGQIYNTVIKRERHGDYLGKTVQVIPHITNEIKQRIVNCGKQQENIDVVLVEIGGTAGDIESLPFLEAIRQFTYDHRNNCLNIHLTYVPYLKAAGEVKTKPSQHSVQVLRGIGIFPDIIVCRCEVNLSDEVKDKISLFCNVNRRAVIEEKDVEHSIYEVPLDLHKQGIDALICELLHLPNPSINLSEWEKILETIKNPKGTVTVGIVGKYVQHQDAYKSVFESLTHGALAAGYKLQIKRFEADKLPLDDNQLAKTIEGCDGYLVPGGFGERGWLGKIHTAKLCREKKIPYFGICLGMQVMAVEFARHVVGLNEANSTEFDPDTIHPVISLLSEQRGLQDLGGTMRLGAYICDLKLHTKAYQAYKSSQISERHRHRYEFNNTYKEQMEKAGFVVAGTLKGENLCEIAEVKDHPWMIGVQFHPEFKSKPTDPHPLFRDFIQAMIIYHKSQHGK.

The segment at 1–269 (MQTKYIFITG…DALICELLHL (269 aa)) is amidoligase domain. Ser-14 provides a ligand contact to CTP. Ser-14 contributes to the UTP binding site. Residues 15–20 (SLGKGL) and Asp-72 each bind ATP. 2 residues coordinate Mg(2+): Asp-72 and Glu-143. Residues 150–152 (DIE), 189–194 (KTKPSQ), and Lys-225 contribute to the CTP site. UTP is bound by residues 189–194 (KTKPSQ) and Lys-225. ATP is bound at residue 241 to 243 (KDV). The 238-residue stretch at 301–538 (YVQHQDAYKS…IQAMIIYHKS (238 aa)) folds into the Glutamine amidotransferase type-1 domain. An L-glutamine-binding site is contributed by Gly-358. The Nucleophile; for glutamine hydrolysis role is filled by Cys-385. L-glutamine is bound by residues 386–389 (LGMQ), Glu-409, and Arg-466. Active-site residues include His-511 and Glu-513.

It belongs to the CTP synthase family. In terms of assembly, homotetramer.

It catalyses the reaction UTP + L-glutamine + ATP + H2O = CTP + L-glutamate + ADP + phosphate + 2 H(+). It carries out the reaction L-glutamine + H2O = L-glutamate + NH4(+). The enzyme catalyses UTP + NH4(+) + ATP = CTP + ADP + phosphate + 2 H(+). It participates in pyrimidine metabolism; CTP biosynthesis via de novo pathway; CTP from UDP: step 2/2. Its activity is regulated as follows. Allosterically activated by GTP, when glutamine is the substrate; GTP has no effect on the reaction when ammonia is the substrate. The allosteric effector GTP functions by stabilizing the protein conformation that binds the tetrahedral intermediate(s) formed during glutamine hydrolysis. Inhibited by the product CTP, via allosteric rather than competitive inhibition. In terms of biological role, catalyzes the ATP-dependent amination of UTP to CTP with either L-glutamine or ammonia as the source of nitrogen. Regulates intracellular CTP levels through interactions with the four ribonucleotide triphosphates. This Protochlamydia amoebophila (strain UWE25) protein is CTP synthase.